The primary structure comprises 705 residues: Polyphosphate kinase (705 aa).

Position 58 (N58) interacts with ATP. Mg(2+) is bound by residues R389 and R419. The Phosphohistidine intermediate role is filled by H449. The ATP site is built by Y482, R578, and H606.

The protein belongs to the polyphosphate kinase 1 (PPK1) family. It depends on Mg(2+) as a cofactor. An intermediate of this reaction is the autophosphorylated ppk in which a phosphate is covalently linked to a histidine residue through a N-P bond.

It carries out the reaction [phosphate](n) + ATP = [phosphate](n+1) + ADP. Its function is as follows. Catalyzes the reversible transfer of the terminal phosphate of ATP to form a long-chain polyphosphate (polyP). The polypeptide is Polyphosphate kinase (Halalkalibacterium halodurans (strain ATCC BAA-125 / DSM 18197 / FERM 7344 / JCM 9153 / C-125) (Bacillus halodurans)).